Reading from the N-terminus, the 698-residue chain is MFKNLCDKIMTQKILITSALPYANGPLHFGHIAGAYLPADCYARFQRLMKKDVLYICGSDEYGIAITLSADLAGRTPQEHVDLFHHINQSFFEQLQISFDHYSRTTWKGHVEPTHQFFNDLLQNGYIEERTTDQLYSEKDQKFLADRYVVGTCPRCGFENARGDECPCCGASYEATELKNPRSKLTDASLILRPTKHWFLLLEKFKKPLMEWLETKNWKPNVINFIRGYIDHLHARAITRDMKWGISVPLPDSEGKVLYVWFDAPIGYISATKEWALLRGEEKLWEKYWLDPETKLVNFIGKDNIPFHASIFPAMIMGQNQPYKLVDELPANEFYNLEGKQFSKSDGWYIDLEDFFKHYTSDQIRYAIASNAPETSDSEFTWKDFQLRCNSDLLGKYGNLVNRVLVFIHNQCQGKVPESGVLEEQDRKFLKNIQDLVDQAAASYSTFKVRKASQIMMELSQLGNVYFDSKKPWQDAKNDYTKGRMHTTLNCCMECLKALALISFPIIPTAASKVWQFLGFQTPLEQEDWNRVKIEKLPLNQKILTPQILFQRVENEAVEREILKLQQLSLTKEKKSTPQSTQISISENILLKPLVDIEDFRKLDLRVGKIIQANPVPKSKKLFQLLVDIGIEKRIVVAGVAEFYKVEDLIGKNVVVVANLKPANLMGVTSQGMLLAAKGEGNLKLISIEDVAPGSLVS.

The 'HIGH' region motif lies at 21–31 (PYANGPLHFGH). Residues Cys-153, Cys-156, Cys-166, and Cys-169 each coordinate Zn(2+). The 'KMSKS' region motif lies at 341 to 345 (QFSKS). Lys-344 contacts ATP. The tRNA-binding domain occupies 599 to 698 (DFRKLDLRVG…EDVAPGSLVS (100 aa)).

The protein belongs to the class-I aminoacyl-tRNA synthetase family. MetG type 1 subfamily. In terms of assembly, homodimer. Zn(2+) serves as cofactor.

The protein resides in the cytoplasm. The catalysed reaction is tRNA(Met) + L-methionine + ATP = L-methionyl-tRNA(Met) + AMP + diphosphate. Its function is as follows. Is required not only for elongation of protein synthesis but also for the initiation of all mRNA translation through initiator tRNA(fMet) aminoacylation. In Protochlamydia amoebophila (strain UWE25), this protein is Methionine--tRNA ligase.